The sequence spans 368 residues: Lipoyl synthase, chloroplastic (368 aa).

Disordered stretches follow at residues 1–30 (MQSS…RGSV) and 42–61 (PTVG…RDPE). The [4Fe-4S] cluster site is built by Cys-94, Cys-99, Cys-105, Cys-131, Cys-135, Cys-138, and Ser-346. The region spanning 114 to 335 (GEGDGIATAT…KEYGESVGFR (222 aa)) is the Radical SAM core domain.

This sequence belongs to the radical SAM superfamily. Lipoyl synthase family. [4Fe-4S] cluster serves as cofactor.

The protein resides in the plastid. It is found in the chloroplast. The enzyme catalyses [[Fe-S] cluster scaffold protein carrying a second [4Fe-4S](2+) cluster] + N(6)-octanoyl-L-lysyl-[protein] + 2 oxidized [2Fe-2S]-[ferredoxin] + 2 S-adenosyl-L-methionine + 4 H(+) = [[Fe-S] cluster scaffold protein] + N(6)-[(R)-dihydrolipoyl]-L-lysyl-[protein] + 4 Fe(3+) + 2 hydrogen sulfide + 2 5'-deoxyadenosine + 2 L-methionine + 2 reduced [2Fe-2S]-[ferredoxin]. It participates in protein modification; protein lipoylation via endogenous pathway; protein N(6)-(lipoyl)lysine from octanoyl-[acyl-carrier-protein]: step 2/2. Its function is as follows. Catalyzes the radical-mediated insertion of two sulfur atoms into the C-6 and C-8 positions of the octanoyl moiety bound to the lipoyl domains of lipoate-dependent enzymes, thereby converting the octanoylated domains into lipoylated derivatives. The protein is Lipoyl synthase, chloroplastic of Sorghum bicolor (Sorghum).